Here is a 307-residue protein sequence, read N- to C-terminus: Ribonuclease Z (307 aa).

Residues H61, H63, D65, H66, H138, D208, and H264 each coordinate Zn(2+). Catalysis depends on D65, which acts as the Proton acceptor.

Belongs to the RNase Z family. Homodimer. Zn(2+) is required as a cofactor.

The enzyme catalyses Endonucleolytic cleavage of RNA, removing extra 3' nucleotides from tRNA precursor, generating 3' termini of tRNAs. A 3'-hydroxy group is left at the tRNA terminus and a 5'-phosphoryl group is left at the trailer molecule.. Functionally, zinc phosphodiesterase, which displays some tRNA 3'-processing endonuclease activity. Probably involved in tRNA maturation, by removing a 3'-trailer from precursor tRNA. The chain is Ribonuclease Z from Pyrococcus abyssi (strain GE5 / Orsay).